A 209-amino-acid polypeptide reads, in one-letter code: Uracil phosphoribosyltransferase (209 aa).

5-phospho-alpha-D-ribose 1-diphosphate-binding positions include R79, R104, and D131–T139. Residues I194 and G199–A201 each bind uracil. D200 lines the 5-phospho-alpha-D-ribose 1-diphosphate pocket.

This sequence belongs to the UPRTase family. Mg(2+) is required as a cofactor.

The catalysed reaction is UMP + diphosphate = 5-phospho-alpha-D-ribose 1-diphosphate + uracil. The protein operates within pyrimidine metabolism; UMP biosynthesis via salvage pathway; UMP from uracil: step 1/1. With respect to regulation, allosterically activated by GTP. Catalyzes the conversion of uracil and 5-phospho-alpha-D-ribose 1-diphosphate (PRPP) to UMP and diphosphate. The polypeptide is Uracil phosphoribosyltransferase (Pseudoalteromonas atlantica (strain T6c / ATCC BAA-1087)).